The following is a 296-amino-acid chain: MSKTAPKTYITSGHSGCAGCCDAFAAKFTLMGAGPNTIVINPTGCLEVMSTPFPYSSWQVPWIHSLFENAGAVASGVEAALKALGKKDDVKVVSIGGDGSTMDIGLGALSGAFERGHDFTYVCMDNEAYMNTGVQRSSGTPFDASTTTTPAGKVSFGNPRPKKNMPAIMAAHGSPYVATTSIGFPRDMIRKVKKATEIVGPTYIHAQAPCPTGWGFDTSKTLEIAKLAVETCLWPMYEMENGEITQVRKVKNPRPVEEYLRAQKRFKHLFTMEGGEEEIKKIQAIADWNIKHFELQ.

[4Fe-4S] cluster-binding residues include Cys-17, Cys-20, and Cys-45. Positions 140–150 (TPFDASTTTTP) are enriched in polar residues. The segment at 140-159 (TPFDASTTTTPAGKVSFGNP) is disordered. [4Fe-4S] cluster is bound at residue Cys-210.

As to quaternary structure, heterotetramer of one alpha, one beta, one delta and one gamma chain. Requires [4Fe-4S] cluster as cofactor.

It catalyses the reaction 2 oxidized [2Fe-2S]-[ferredoxin] + pyruvate + CoA = 2 reduced [2Fe-2S]-[ferredoxin] + acetyl-CoA + CO2 + H(+). This chain is Pyruvate synthase subunit PorB (porB), found in Methanosarcina barkeri (strain Fusaro / DSM 804).